Here is a 141-residue protein sequence, read N- to C-terminus: Ribonuclease VapC16 (141 aa).

Residue Asp99 participates in Mg(2+) binding. Residues 99–141 (DHAHTAHRRASGSPSTSIRPCAHRPGTAAWPDDHHRRRPVSCL) are disordered.

The protein belongs to the PINc/VapC protein family. It depends on Mg(2+) as a cofactor.

In terms of biological role, toxic component of a type II toxin-antitoxin (TA) system. An RNase. The cognate antitoxin is VapB16. This Mycobacterium tuberculosis (strain ATCC 25618 / H37Rv) protein is Ribonuclease VapC16.